We begin with the raw amino-acid sequence, 410 residues long: Cysteine desulfurase IscS (410 aa).

Pyridoxal 5'-phosphate is bound by residues 80 to 81 (AT), N160, Q188, and 208 to 210 (SGH). K211 is modified (N6-(pyridoxal phosphate)lysine). T248 contributes to the pyridoxal 5'-phosphate binding site. C334 functions as the Cysteine persulfide intermediate in the catalytic mechanism. C334 provides a ligand contact to [2Fe-2S] cluster.

The protein belongs to the class-V pyridoxal-phosphate-dependent aminotransferase family. NifS/IscS subfamily. Homodimer. Forms a heterotetramer with IscU, interacts with other sulfur acceptors. Requires pyridoxal 5'-phosphate as cofactor.

It localises to the cytoplasm. It carries out the reaction (sulfur carrier)-H + L-cysteine = (sulfur carrier)-SH + L-alanine. Its pathway is cofactor biosynthesis; iron-sulfur cluster biosynthesis. In terms of biological role, master enzyme that delivers sulfur to a number of partners involved in Fe-S cluster assembly, tRNA modification or cofactor biosynthesis. Catalyzes the removal of elemental sulfur atoms from cysteine to produce alanine. Functions as a sulfur delivery protein for Fe-S cluster synthesis onto IscU, an Fe-S scaffold assembly protein, as well as other S acceptor proteins. The polypeptide is Cysteine desulfurase IscS (Rickettsia rickettsii (strain Iowa)).